The sequence spans 413 residues: Serine hydroxymethyltransferase (413 aa).

(6S)-5,6,7,8-tetrahydrofolate contacts are provided by residues leucine 118 and 122 to 124; that span reads GHL. Position 228 is an N6-(pyridoxal phosphate)lysine (lysine 228).

It belongs to the SHMT family. In terms of assembly, homodimer. Pyridoxal 5'-phosphate serves as cofactor.

The protein localises to the cytoplasm. It catalyses the reaction (6R)-5,10-methylene-5,6,7,8-tetrahydrofolate + glycine + H2O = (6S)-5,6,7,8-tetrahydrofolate + L-serine. It functions in the pathway one-carbon metabolism; tetrahydrofolate interconversion. Its pathway is amino-acid biosynthesis; glycine biosynthesis; glycine from L-serine: step 1/1. Its function is as follows. Catalyzes the reversible interconversion of serine and glycine with tetrahydrofolate (THF) serving as the one-carbon carrier. This reaction serves as the major source of one-carbon groups required for the biosynthesis of purines, thymidylate, methionine, and other important biomolecules. Also exhibits THF-independent aldolase activity toward beta-hydroxyamino acids, producing glycine and aldehydes, via a retro-aldol mechanism. The sequence is that of Serine hydroxymethyltransferase from Phytoplasma australiense.